Consider the following 281-residue polypeptide: NADPH-dependent 7-cyano-7-deazaguanine reductase (281 aa).

86-88 (IES) is a binding site for substrate. An NADPH-binding site is contributed by 88-89 (SK). Cys-189 functions as the Thioimide intermediate in the catalytic mechanism. Residue Asp-196 is the Proton donor of the active site. Residue 228–229 (HE) participates in substrate binding. Position 257–258 (257–258 (RG)) interacts with NADPH.

This sequence belongs to the GTP cyclohydrolase I family. QueF type 2 subfamily. In terms of assembly, homodimer.

The protein localises to the cytoplasm. The enzyme catalyses 7-aminomethyl-7-carbaguanine + 2 NADP(+) = 7-cyano-7-deazaguanine + 2 NADPH + 3 H(+). Its pathway is tRNA modification; tRNA-queuosine biosynthesis. In terms of biological role, catalyzes the NADPH-dependent reduction of 7-cyano-7-deazaguanine (preQ0) to 7-aminomethyl-7-deazaguanine (preQ1). The chain is NADPH-dependent 7-cyano-7-deazaguanine reductase from Mannheimia succiniciproducens (strain KCTC 0769BP / MBEL55E).